The chain runs to 941 residues: Translation initiation factor IF-2 (941 aa).

2 disordered regions span residues 61-204 (IQSN…RREN) and 249-274 (QEKDKETKKAKKSNKPKAIPAAKNNK). Basic and acidic residues predominate over residues 147-163 (EKAKQKLQEIQKSREAL). Residues 164–179 (NKLTQSNTNNANNANS) are compositionally biased toward low complexity. Residues 180 to 204 (AKKEISEVAKQEREQEHLDNKRREN) are compositionally biased toward basic and acidic residues. Residues 440 to 609 (ERPPVVTIMG…LIQADIMELK (170 aa)) form the tr-type G domain. Positions 449-456 (GHVDHGKT) are G1. 449 to 456 (GHVDHGKT) serves as a coordination point for GTP. A G2 region spans residues 474–478 (GITQH). Positions 495-498 (DTPG) are G3. GTP is bound by residues 495–499 (DTPGH) and 549–552 (NKMD). The tract at residues 549-552 (NKMD) is G4. The G5 stretch occupies residues 585–587 (SAK).

This sequence belongs to the TRAFAC class translation factor GTPase superfamily. Classic translation factor GTPase family. IF-2 subfamily.

It localises to the cytoplasm. In terms of biological role, one of the essential components for the initiation of protein synthesis. Protects formylmethionyl-tRNA from spontaneous hydrolysis and promotes its binding to the 30S ribosomal subunits. Also involved in the hydrolysis of GTP during the formation of the 70S ribosomal complex. The chain is Translation initiation factor IF-2 from Helicobacter acinonychis (strain Sheeba).